The chain runs to 24 residues: GFRDVLKGAAKAFVKTVAGHIANI.

As to expression, expressed by the skin glands.

The protein localises to the secreted. Antimicrobial peptide that shows higher potency against Gram-negative bacteria than against Gram-positive bacteria. Has a very week hemolytic activity. In Ascaphus truei (Coastal tailed frog), this protein is Ascaphin-3.